Consider the following 348-residue polypeptide: D-lactate dehydrogenase kk1H (348 aa).

Residues 158–159 (RI), Asp178, 208–209 (CP), 235–237 (TSR), and Asp261 each bind NAD(+). Arg237 is a catalytic residue. Glu266 is an active-site residue. Catalysis depends on His298, which acts as the Proton donor.

It belongs to the D-isomer specific 2-hydroxyacid dehydrogenase family.

The protein operates within secondary metabolite biosynthesis. D-lactate dehydrogenase; part of the gene cluster that mediates the biosynthesis of KK-1, a novel cyclic depsipeptide with 10 residues which is a promising active compound with high activity against many plant pathogens, especially Botrytis cinerea. Within the pathway, kk1H catalyzes in the synthesis of D-lactic acid from pyruvic acid, which is recognized by the A domain of the first kk1B module. The nonribosomal peptide synthetase (NRPS) kk1B catalyzes the elongation and cyclization of the decapeptide chain composed of 1 D-lactic acid residue (D-Lac), 1 pipecolic acid residue (Pip), 1 aspartic acid residue (Asp), 1 isoleucine residue (Ile), 1 glycine residue (Gly), 1 tyrosine residue (Tyr) and 4 valine residues (Val). The Asp, Ile and 3 Val residues are N-methylated by the 5 methyltransferase domains from the NRPS (found in modules 3, 5, 6, 7 and 9), whereas the Tyr residue is O-methylated by the cluster encoded O-methyltransferase kk1A. The thioesterase kk1J is likely to be involved in the corrective mechanism of peptide chain synthesis. The D-lactate dehydrogenase kk1H is involved in the synthesis of D-lactic acid from pyruvic acid, which is recognized by the A domain of the first kk1B module. The pyrroline-5-carboxylate reductase kk1I is involved in the synthesis of the L-pipecolic acid residue of KK-1 from delta-1-pyrroline-5-carboxylate (P5C), a metabolic intermediate of lysine. It still is unclear how kk1C and kk1D are involved in the production of KK-1. The sequence is that of D-lactate dehydrogenase kk1H from Curvularia clavata.